Consider the following 248-residue polypeptide: tRNA (guanine-N(1)-)-methyltransferase (248 aa).

S-adenosyl-L-methionine is bound by residues Gly116 and 135-140; that span reads IGDFVL.

Belongs to the RNA methyltransferase TrmD family. In terms of assembly, homodimer.

Its subcellular location is the cytoplasm. The catalysed reaction is guanosine(37) in tRNA + S-adenosyl-L-methionine = N(1)-methylguanosine(37) in tRNA + S-adenosyl-L-homocysteine + H(+). Its function is as follows. Specifically methylates guanosine-37 in various tRNAs. In Anaeromyxobacter sp. (strain Fw109-5), this protein is tRNA (guanine-N(1)-)-methyltransferase.